Reading from the N-terminus, the 167-residue chain is Putative C-type lectin protein FPV008/FPV253 (167 aa).

Positions 49–152 (CPDEWIGYNS…SCIFHERTIC (104 aa)) constitute a C-type lectin domain. 2 disulfide bridges follow: Cys-77–Cys-152 and Cys-131–Cys-144.

In Vertebrata (FPV), this protein is Putative C-type lectin protein FPV008/FPV253.